A 280-amino-acid polypeptide reads, in one-letter code: 1-cyclohexenylcarbonyl-CoA reductase (280 aa).

Residues 22-25 (SRGI), 71-72 (DV), and asparagine 98 each bind NADP(+). Catalysis depends on proton acceptor residues tyrosine 158 and lysine 165. NADP(+)-binding positions include lysine 165 and 194 to 196 (IDS).

The protein belongs to the short-chain dehydrogenases/reductases (SDR) family. Homodimer.

The catalysed reaction is (4R,5R)-4,5-dihydroxycyclohex-2-ene-1-carbonyl-CoA + NADP(+) = (3R,4R)-3,4-dihydroxycyclohexa-1,5-diene-1-carbonyl-CoA + NADPH + H(+). It carries out the reaction (3S)-3-hydroxycyclohexane-1-carbonyl-CoA + NADP(+) = (5S)-5-hydroxycyclohex-1-ene-1-carbonyl-CoA + NADPH + H(+). It catalyses the reaction cyclohexane-1-carbonyl-CoA + NADP(+) = cyclohex-1-ene-1-carbonyl-CoA + NADPH + H(+). Its pathway is antibiotic biosynthesis. With respect to regulation, inhibited by the thiol inhibitors p-chloromercuribenzoate, N-ethylmaleimide and iodoacetamide. Also inhibited by various divalent cations. Involved in the biosynthesis of the antifungal antibiotic ansatrienin A (mycotrienin I). Catalyzes three of the reductive steps involved in the formation of the cyclohexanecarboxylic acid (CHC) moiety of ansatrienin from shikimic acid. Can use 3,4-dihydroxycyclohexa-1,5-diene-1-carbonyl-CoA, 5-hydroxycyclohex-1-ene-1-carbonyl-CoA and cyclohex-1-ene-1-carbonyl-CoA as substrates. This Streptomyces collinus protein is 1-cyclohexenylcarbonyl-CoA reductase.